Consider the following 152-residue polypeptide: Acidic phospholipase A2 S16-19 (152 aa).

An N-terminal signal peptide occupies residues 1–19 (MYPAHLLVLLAVCVSLLGA). Residues 20–27 (SNIPLPSL) constitute a propeptide that is removed on maturation. Intrachain disulfides connect Cys-38-Cys-104, Cys-54-Cys-151, Cys-71-Cys-132, Cys-78-Cys-125, Cys-88-Cys-118, and Cys-111-Cys-123. 3 residues coordinate Ca(2+): Tyr-55, Gly-57, and Gly-59. His-75 is an active-site residue. Asp-76 lines the Ca(2+) pocket. Residue Asp-126 is part of the active site.

Belongs to the phospholipase A2 family. Group I subfamily. D49 sub-subfamily. Ca(2+) is required as a cofactor. Post-translationally, this enzyme lacks one of the seven disulfide bonds found in similar PLA2 proteins. Expressed by the venom gland.

The protein localises to the secreted. The catalysed reaction is a 1,2-diacyl-sn-glycero-3-phosphocholine + H2O = a 1-acyl-sn-glycero-3-phosphocholine + a fatty acid + H(+). Its function is as follows. Snake venom phospholipase A2 (PLA2) that inhibits collagen-induced platelet aggregation. PLA2 catalyzes the calcium-dependent hydrolysis of the 2-acyl groups in 3-sn-phosphoglycerides. The protein is Acidic phospholipase A2 S16-19 of Austrelaps superbus (Lowland copperhead snake).